The primary structure comprises 98 residues: NADH-ubiquinone oxidoreductase chain 4L (98 aa).

The next 3 membrane-spanning stretches (helical) occupy residues 1–21 (MSLI…GLLM), 29–49 (ALLC…LTIL), and 61–81 (IILL…LVMI).

Belongs to the complex I subunit 4L family. As to quaternary structure, core subunit of respiratory chain NADH dehydrogenase (Complex I) which is composed of 45 different subunits.

The protein resides in the mitochondrion inner membrane. The enzyme catalyses a ubiquinone + NADH + 5 H(+)(in) = a ubiquinol + NAD(+) + 4 H(+)(out). Its function is as follows. Core subunit of the mitochondrial membrane respiratory chain NADH dehydrogenase (Complex I) which catalyzes electron transfer from NADH through the respiratory chain, using ubiquinone as an electron acceptor. Part of the enzyme membrane arm which is embedded in the lipid bilayer and involved in proton translocation. The protein is NADH-ubiquinone oxidoreductase chain 4L (MT-ND4L) of Platanista minor (Indus river dolphin).